The primary structure comprises 347 residues: UDP-rhamnose/UDP-galactose transporter 1 (347 aa).

10 helical membrane-spanning segments follow: residues 11 to 31 (AVSD…IIMA), 43 to 63 (FGFA…VGMV), 80 to 100 (LLWF…SLML), 103 to 123 (VGFY…LEWI), 132 to 152 (EVKA…VTDV), 159 to 179 (FICA…IGSL), 195 to 215 (APIQ…LLSG), 223 to 243 (MTYG…FCNI), 256 to 276 (SFQV…WLLF), and 285 to 305 (IAGM…VDIE).

Belongs to the TPT transporter family. TPT (TC 2.A.7.9) subfamily. As to expression, widely expressed in the whole plant.

It localises to the golgi apparatus membrane. Nucleotide-sugar transporter that transports UDP-rhamnose or UDP-galactose and UMP in a strict counter-exchange mode. This Arabidopsis thaliana (Mouse-ear cress) protein is UDP-rhamnose/UDP-galactose transporter 1.